A 205-amino-acid chain; its full sequence is Guanylate kinase (205 aa).

Residues 7–185 (GNIFIISAAS…AEEDLRHIVN (179 aa)) enclose the Guanylate kinase-like domain. 14-21 (AASGTGKT) is an ATP binding site.

This sequence belongs to the guanylate kinase family.

It is found in the cytoplasm. The enzyme catalyses GMP + ATP = GDP + ADP. Functionally, essential for recycling GMP and indirectly, cGMP. The protein is Guanylate kinase (gmk) of Neisseria meningitidis serogroup A / serotype 4A (strain DSM 15465 / Z2491).